The following is a 338-amino-acid chain: Large ribosomal subunit protein uL3 (338 aa).

Disordered stretches follow at residues 230 to 256 (HRKG…RPGQ) and 315 to 338 (PARP…SQQP).

The protein belongs to the universal ribosomal protein uL3 family. In terms of assembly, part of the 50S ribosomal subunit. Forms a cluster with proteins L14 and L24e.

One of the primary rRNA binding proteins, it binds directly near the 3'-end of the 23S rRNA, where it nucleates assembly of the 50S subunit. The polypeptide is Large ribosomal subunit protein uL3 (Pyrobaculum arsenaticum (strain DSM 13514 / JCM 11321 / PZ6)).